A 609-amino-acid chain; its full sequence is UvrABC system protein C (609 aa).

Residues His-13 to Val-91 enclose the GIY-YIG domain. The UVR domain maps to Gln-201–Val-236.

The protein belongs to the UvrC family. As to quaternary structure, interacts with UvrB in an incision complex.

The protein resides in the cytoplasm. The UvrABC repair system catalyzes the recognition and processing of DNA lesions. UvrC both incises the 5' and 3' sides of the lesion. The N-terminal half is responsible for the 3' incision and the C-terminal half is responsible for the 5' incision. The chain is UvrABC system protein C from Haemophilus influenzae (strain 86-028NP).